Here is a 188-residue protein sequence, read N- to C-terminus: Acireductone dioxygenase (188 aa).

Fe(2+) contacts are provided by H97, H99, E103, and H141. Ni(2+) is bound by residues H97, H99, E103, and H141.

The protein belongs to the acireductone dioxygenase (ARD) family. As to quaternary structure, monomer. Fe(2+) is required as a cofactor. The cofactor is Ni(2+).

It carries out the reaction 1,2-dihydroxy-5-(methylsulfanyl)pent-1-en-3-one + O2 = 3-(methylsulfanyl)propanoate + CO + formate + 2 H(+). It catalyses the reaction 1,2-dihydroxy-5-(methylsulfanyl)pent-1-en-3-one + O2 = 4-methylsulfanyl-2-oxobutanoate + formate + 2 H(+). The protein operates within amino-acid biosynthesis; L-methionine biosynthesis via salvage pathway; L-methionine from S-methyl-5-thio-alpha-D-ribose 1-phosphate: step 5/6. Its function is as follows. Catalyzes 2 different reactions between oxygen and the acireductone 1,2-dihydroxy-3-keto-5-methylthiopentene (DHK-MTPene) depending upon the metal bound in the active site. Fe-containing acireductone dioxygenase (Fe-ARD) produces formate and 2-keto-4-methylthiobutyrate (KMTB), the alpha-ketoacid precursor of methionine in the methionine recycle pathway. Ni-containing acireductone dioxygenase (Ni-ARD) produces methylthiopropionate, carbon monoxide and formate, and does not lie on the methionine recycle pathway. The sequence is that of Acireductone dioxygenase from Xanthomonas axonopodis pv. citri (strain 306).